A 262-amino-acid polypeptide reads, in one-letter code: Phosphomannomutase 1 (262 aa).

Alanine 2 is modified (N-acetylalanine). Aspartate 19 (nucleophile) is an active-site residue. Residues aspartate 19 and aspartate 21 each contribute to the Mg(2+) site. Aspartate 21 functions as the Proton donor/acceptor in the catalytic mechanism. Positions 28, 132, 143, 150, 186, 188, and 190 each coordinate alpha-D-mannose 1-phosphate. 4 residues coordinate Mg(2+): asparagine 218, phenylalanine 230, aspartate 232, and threonine 235. Residue serine 242 is modified to Phosphoserine.

This sequence belongs to the eukaryotic PMM family. As to quaternary structure, homodimer. The cofactor is Mg(2+). As to expression, strong expression in liver, heart, brain, and pancreas; lower expression in skeletal muscle.

The protein resides in the cytoplasm. It catalyses the reaction alpha-D-mannose 1-phosphate = D-mannose 6-phosphate. It functions in the pathway nucleotide-sugar biosynthesis; GDP-alpha-D-mannose biosynthesis; alpha-D-mannose 1-phosphate from D-fructose 6-phosphate: step 2/2. Its activity is regulated as follows. IMP, a metabolite whose concentration is elevated in anoxia, inhibits phosphomannomutase and phosphoglucomutase activities and strongly enhances glucose-1,6-bisphosphatase activity. Involved in the synthesis of the GDP-mannose and dolichol-phosphate-mannose required for a number of critical mannosyl transfer reactions. In addition, may be responsible for the degradation of glucose-1,6-bisphosphate in ischemic brain. The polypeptide is Phosphomannomutase 1 (PMM1) (Homo sapiens (Human)).